Consider the following 464-residue polypeptide: Adenosylhomocysteinase (464 aa).

Residues threonine 56, aspartate 131, and glutamate 190 each contribute to the substrate site. Residue 191–193 (TTT) coordinates NAD(+). Substrate is bound by residues lysine 220 and aspartate 224. NAD(+) is bound by residues asparagine 225, 254–259 (GFGDVG), glutamate 277, asparagine 312, 333–335 (IGH), and asparagine 378.

Belongs to the adenosylhomocysteinase family. Requires NAD(+) as cofactor.

The protein localises to the cytoplasm. The enzyme catalyses S-adenosyl-L-homocysteine + H2O = L-homocysteine + adenosine. The protein operates within amino-acid biosynthesis; L-homocysteine biosynthesis; L-homocysteine from S-adenosyl-L-homocysteine: step 1/1. Its function is as follows. May play a key role in the regulation of the intracellular concentration of adenosylhomocysteine. The sequence is that of Adenosylhomocysteinase from Zymomonas mobilis subsp. mobilis (strain ATCC 31821 / ZM4 / CP4).